The following is a 94-amino-acid chain: Defensin-like protein 21 (94 aa).

A signal peptide spans 1-26; it reads MVRTNVVSFVLFAAIVLCIGSIQIDG. Disulfide bonds link C41–C92, C51–C79, C65–C88, and C69–C90.

It belongs to the DEFL family.

Its subcellular location is the secreted. This is Defensin-like protein 21 from Arabidopsis thaliana (Mouse-ear cress).